A 662-amino-acid polypeptide reads, in one-letter code: DNA helicase/primase complex-associated protein (662 aa).

This sequence belongs to the herpesviridae HEPA family. Associates with the primase and the helicase to form the helicase-primase complex. Interacts with the origin-binding protein. Interacts with the polymerase catalytic subunit.

Its subcellular location is the host nucleus. Functionally, component of the helicase/primase complex. Unwinds the DNA at the replication forks and generates single-stranded DNA for both leading and lagging strand synthesis. The primase synthesizes short RNA primers on the lagging strand that the polymerase presumably elongates using dNTPs. The primase-associated factor has no known catalytic activity in the complex and may serve to facilitate the formation of the replisome by directly interacting with the origin-binding protein and the polymerase. This Human herpesvirus 6A (strain Uganda-1102) (HHV-6 variant A) protein is DNA helicase/primase complex-associated protein (U74).